The chain runs to 725 residues: Sodium/hydrogen exchanger 7 (725 aa).

Residues 1–20 form a disordered region; sequence MEPGDAARPGSGRATGAPPP. Topologically, residues 1-21 are cytoplasmic; it reads MEPGDAARPGSGRATGAPPPR. Residues 22–42 form a helical membrane-spanning segment; it reads LLLLPLLLGWGLRVAAAASAS. Over 43–70 the chain is Lumenal; sequence SSGAAAEDSSAMEELATEKEAEESHRQD. The chain crosses the membrane as a helical span at residues 71–91; that stretch reads SVSLLTFILLLTLTILTIWLF. The Cytoplasmic segment spans residues 92 to 95; it reads KHRR. The helical transmembrane segment at 96–116 threads the bilayer; sequence VRFLHETGLAMIYGLIVGVIL. At 117–175 the chain is on the lumenal side; that stretch reads RYGTPATSGRDKSLSCTQEDRAFSTLLVNVSGKFFEYTLKGEISPGKINSVEQNDMLRK. N-linked (GlcNAc...) asparagine glycosylation is present at Asn145. Residues 176–196 traverse the membrane as a helical segment; it reads VTFDPEVFFNILLPPIIFHAG. Residues 197-210 are Cytoplasmic-facing; it reads YSLKKRHFFRNLGS. The helical transmembrane segment at 211 to 231 threads the bilayer; it reads ILAYAFLGTAVSCFIIGNLMY. At 232–251 the chain is on the lumenal side; it reads GVVKLMKIMGQLSDKFYYTD. A helical membrane pass occupies residues 252-272; sequence CLFFGAIISATDPVTVLAIFN. Residues 273-277 are Cytoplasmic-facing; sequence ELHAD. Residues 278-298 form a helical membrane-spanning segment; the sequence is VDLYALLFGESVLNDAVAIVL. Over 299–322 the chain is Lumenal; it reads SSSIVAYQPAGLNTHAFDAAAFFK. A helical transmembrane segment spans residues 323 to 343; the sequence is SVGIFLGIFSGSFTMGAVTGV. The Cytoplasmic portion of the chain corresponds to 344–349; that stretch reads NANVTK. Helical transmembrane passes span 350–370 and 371–391; these read FTKL…MSWS and TFLL…FCGI. The Cytoplasmic portion of the chain corresponds to 392–414; the sequence is TQAHYTYNNLSVESRSRTKQLFE. Residues 415–435 form a helical membrane-spanning segment; sequence VLHFLAENFIFSYMGLALFTF. At 436-442 the chain is on the lumenal side; that stretch reads QKHVFSP. The chain crosses the membrane as a helical span at residues 443–463; sequence IFIIGAFVAIFLGRAAHIYPL. The Cytoplasmic segment spans residues 464 to 474; sequence SFFLNLGRRHK. A helical transmembrane segment spans residues 475 to 497; it reads IGWNFQHMMMFSGLRGAMAFALA. The Lumenal segment spans residues 498 to 513; the sequence is IRDTASYARQMMFTTT. Residues 514–534 form a helical membrane-spanning segment; sequence LLIVFFTVWIIGGGTTPMLSW. Required for trans-Golgi network localization regions lie at residues 533-559 and 563-568; these read SWLN…YFRV and PDQDPP. Over 535 to 725 the chain is Cytoplasmic; it reads LNIRVGVEEP…RLVFPLEDNA (191 aa). Residue Ser545 is modified to Phosphoserine. Disordered stretches follow at residues 567–590 and 669–714; these read PPPN…GNRT and TVTA…SSRG. Over residues 675 to 684 the composition is skewed to low complexity; that stretch reads SSSSHTASTS. Positions 687-704 are enriched in basic and acidic residues; the sequence is GSRRTKSSSEEVLERDLG.

Belongs to the monovalent cation:proton antiporter 1 (CPA1) transporter (TC 2.A.36) family. Interacts with SCAMP1, SCAMP2 and SCAMP5; may participate in its shuttling from trans-Golgi network to recycling endosomes. In terms of processing, N-glycosylated. Ubiquitously expressed.

It is found in the golgi apparatus. It localises to the trans-Golgi network membrane. Its subcellular location is the recycling endosome membrane. The protein localises to the cell membrane. The enzyme catalyses Na(+)(in) + H(+)(out) = Na(+)(out) + H(+)(in). The catalysed reaction is K(+)(in) + H(+)(out) = K(+)(out) + H(+)(in). Its activity is regulated as follows. Inhibited by benzamil and quinine but not by amiloride. Functionally, golgi Na(+), K(+)/(H+) antiporter. Mediates the electoneutral influx of Na(+) or K(+) in exchange for H(+). May contribute to the regulation of Golgi apparatus volume and pH. The sequence is that of Sodium/hydrogen exchanger 7 (SLC9A7) from Homo sapiens (Human).